The primary structure comprises 250 residues: Isoprenyl transferase (250 aa).

The active site involves aspartate 27. Residue aspartate 27 participates in Mg(2+) binding. Residues 28-31, tryptophan 32, histidine 48, and 76-78 contribute to the substrate site; these read GNRR and STE. Catalysis depends on asparagine 79, which acts as the Proton acceptor. Residues phenylalanine 80, arginine 82, arginine 199, and 205–207 each bind substrate; that span reads RVS. Mg(2+) is bound at residue glutamate 218.

It belongs to the UPP synthase family. Homodimer. The cofactor is Mg(2+).

Its function is as follows. Catalyzes the condensation of isopentenyl diphosphate (IPP) with allylic pyrophosphates generating different type of terpenoids. The chain is Isoprenyl transferase from Chlamydia pneumoniae (Chlamydophila pneumoniae).